The chain runs to 417 residues: NADH-dependent phenylglyoxylate dehydrogenase subunit alpha (417 aa).

As to quaternary structure, dimer of heteropentamers composed of an alpha (PadG), a beta (PadI), a gamma (PadE), a delta (PadF) and an epsilon (PadH) subunit.

It carries out the reaction phenylglyoxylate + NAD(+) + CoA = benzoyl-CoA + CO2 + NADH. Its activity is regulated as follows. Activated by magnesium ions and thiamine diphosphate. In terms of biological role, involved in the anaerobic metabolism of phenylalanine and phenylacetate. Catalyzes the oxidative decarboxylation of phenylglyoxylate to benzoyl-CoA and CO(2). It can also react slowly with 2-oxo-3-methylbutanoate and use different electron acceptors such as benzyl viologen, methyl viologen, FAD or FMN, but NAD seems to be the physiological electron acceptor. Also catalyzes an isotope exchange between CO(2) and the carboxyl group which proves partial or complete reversibility of the oxidative decarboxylation reaction. This is NADH-dependent phenylglyoxylate dehydrogenase subunit alpha (padG) from Aromatoleum evansii (Azoarcus evansii).